A 225-amino-acid chain; its full sequence is ATP-dependent dethiobiotin synthetase BioD 1 (225 aa).

Glutamate 13 and threonine 17 together coordinate Mg(2+). An ATP-binding site is contributed by 13–18 (EVGKTV). Lysine 38 is an active-site residue. Residue serine 42 participates in substrate binding. Residues aspartate 55 and glutamate 116 each contribute to the Mg(2+) site. ATP-binding positions include aspartate 55, 116–119 (EGAG), and 176–177 (ND). Tyrosine 188 serves as a coordination point for substrate. Residues 205–207 (PWL) and glutamate 212 each bind ATP.

Belongs to the dethiobiotin synthetase family. In terms of assembly, homodimer. Mg(2+) is required as a cofactor.

The protein resides in the cytoplasm. The enzyme catalyses (7R,8S)-7,8-diammoniononanoate + CO2 + ATP = (4R,5S)-dethiobiotin + ADP + phosphate + 3 H(+). Its pathway is cofactor biosynthesis; biotin biosynthesis; biotin from 7,8-diaminononanoate: step 1/2. Functionally, catalyzes a mechanistically unusual reaction, the ATP-dependent insertion of CO2 between the N7 and N8 nitrogen atoms of 7,8-diaminopelargonic acid (DAPA, also called 7,8-diammoniononanoate) to form a ureido ring. Only CTP can partially replace ATP while diaminobiotin is only 37% as effective as 7,8-diaminopelargonic acid. In another study both CTP and GTP (but not ITP, TTP or UTP) can partially replace ATP. In Escherichia coli (strain K12), this protein is ATP-dependent dethiobiotin synthetase BioD 1.